Here is a 182-residue protein sequence, read N- to C-terminus: 7-carboxy-7-deazaguanine synthase (182 aa).

Substrate contacts are provided by residues 12–14 (LQG) and Arg27. Residues 18–182 (HTGTPAVFIR…LQTHKLIDIR (165 aa)) form the Radical SAM core domain. Positions 31, 35, and 38 each coordinate [4Fe-4S] cluster. Thr40 contacts Mg(2+). Thr68 is a substrate binding site. Residues Gly70 and 111-113 (SPK) contribute to the S-adenosyl-L-methionine site.

The protein belongs to the radical SAM superfamily. 7-carboxy-7-deazaguanine synthase family. As to quaternary structure, homodimer. The cofactor is [4Fe-4S] cluster. S-adenosyl-L-methionine serves as cofactor. Requires Mg(2+) as cofactor.

The enzyme catalyses 6-carboxy-5,6,7,8-tetrahydropterin + H(+) = 7-carboxy-7-deazaguanine + NH4(+). It participates in purine metabolism; 7-cyano-7-deazaguanine biosynthesis. Its function is as follows. Catalyzes the complex heterocyclic radical-mediated conversion of 6-carboxy-5,6,7,8-tetrahydropterin (CPH4) to 7-carboxy-7-deazaguanine (CDG), a step common to the biosynthetic pathways of all 7-deazapurine-containing compounds. This is 7-carboxy-7-deazaguanine synthase from Bacteroides thetaiotaomicron (strain ATCC 29148 / DSM 2079 / JCM 5827 / CCUG 10774 / NCTC 10582 / VPI-5482 / E50).